We begin with the raw amino-acid sequence, 257 residues long: S-methyl-5'-thioadenosine phosphorylase (257 aa).

Phosphate-binding positions include S10 and 50–51; that span reads RH. M180 provides a ligand contact to substrate. Phosphate is bound at residue T181. 204–206 is a binding site for substrate; it reads DYD.

It belongs to the PNP/MTAP phosphorylase family. MTAP subfamily. Homohexamer. Dimer of a homotrimer.

The enzyme catalyses S-methyl-5'-thioadenosine + phosphate = 5-(methylsulfanyl)-alpha-D-ribose 1-phosphate + adenine. The protein operates within amino-acid biosynthesis; L-methionine biosynthesis via salvage pathway; S-methyl-5-thio-alpha-D-ribose 1-phosphate from S-methyl-5'-thioadenosine (phosphorylase route): step 1/1. Catalyzes the reversible phosphorylation of S-methyl-5'-thioadenosine (MTA) to adenine and 5-methylthioribose-1-phosphate. Involved in the breakdown of MTA, a major by-product of polyamine biosynthesis. Responsible for the first step in the methionine salvage pathway after MTA has been generated from S-adenosylmethionine. Has broad substrate specificity with 6-aminopurine nucleosides as preferred substrates. The sequence is that of S-methyl-5'-thioadenosine phosphorylase from Pyrococcus horikoshii (strain ATCC 700860 / DSM 12428 / JCM 9974 / NBRC 100139 / OT-3).